The sequence spans 405 residues: Cystathionine gamma-lyase (405 aa).

Arg-62, Tyr-114, and Arg-119 together coordinate substrate. At Lys-212 the chain carries N6-(pyridoxal phosphate)lysine. Glu-339 provides a ligand contact to substrate.

It belongs to the trans-sulfuration enzymes family. As to quaternary structure, homotetramer. Interacts with CALM in a calcium-dependent manner. The cofactor is pyridoxal 5'-phosphate.

Its subcellular location is the cytoplasm. It catalyses the reaction L,L-cystathionine + H2O = 2-oxobutanoate + L-cysteine + NH4(+). The protein operates within amino-acid biosynthesis; L-cysteine biosynthesis; L-cysteine from L-homocysteine and L-serine: step 2/2. Its function is as follows. Catalyzes the last step in the trans-sulfuration pathway from methionine to cysteine. Has broad substrate specificity. Converts cystathionine to cysteine, ammonia and 2-oxobutanoate. Converts two cysteine molecules to lanthionine and hydrogen sulfide. Can also accept homocysteine as substrate. Specificity depends on the levels of the endogenous substrates. Generates the endogenous signaling molecule hydrogen sulfide (H2S), and so contributes to the regulation of blood pressure. Acts as a cysteine-protein sulfhydrase by mediating sulfhydration of target proteins: sulfhydration consists of converting -SH groups into -SSH on specific cysteine residues of target proteins such as GAPDH, PTPN1 and NF-kappa-B subunit RELA, thereby regulating their function. In Bos taurus (Bovine), this protein is Cystathionine gamma-lyase (CTH).